A 177-amino-acid chain; its full sequence is UPF0114 protein HP_0189 (177 aa).

Helical transmembrane passes span 15–35 (WLLAPLCIAMSLVLVVLGYVF), 54–74 (LVLSALGLVDLLFMAGLVLMV), and 145–165 (PIFWQVVIHLVFVCSALLAAV).

This sequence belongs to the UPF0114 family.

The protein localises to the cell membrane. This Helicobacter pylori (strain ATCC 700392 / 26695) (Campylobacter pylori) protein is UPF0114 protein HP_0189.